A 1227-amino-acid polypeptide reads, in one-letter code: ATP-dependent helicase/nuclease subunit A (1227 aa).

In terms of domain architecture, UvrD-like helicase ATP-binding spans 3 to 477; sequence VKYTPDQARA…IIFAENFRSS (475 aa). 24 to 31 serves as a coordination point for ATP; it reads ASAGSGKT. In terms of domain architecture, UvrD-like helicase C-terminal spans 505-788; that stretch reads GQLKFAAGYD…KLMTIHASKG (284 aa).

This sequence belongs to the helicase family. AddA subfamily. Heterodimer of AddA and AddB/RexB. Requires Mg(2+) as cofactor.

It carries out the reaction Couples ATP hydrolysis with the unwinding of duplex DNA by translocating in the 3'-5' direction.. It catalyses the reaction ATP + H2O = ADP + phosphate + H(+). In terms of biological role, the heterodimer acts as both an ATP-dependent DNA helicase and an ATP-dependent, dual-direction single-stranded exonuclease. Recognizes the chi site generating a DNA molecule suitable for the initiation of homologous recombination. The AddA nuclease domain is required for chi fragment generation; this subunit has the helicase and 3' -&gt; 5' nuclease activities. This chain is ATP-dependent helicase/nuclease subunit A, found in Lactobacillus delbrueckii subsp. bulgaricus (strain ATCC 11842 / DSM 20081 / BCRC 10696 / JCM 1002 / NBRC 13953 / NCIMB 11778 / NCTC 12712 / WDCM 00102 / Lb 14).